Reading from the N-terminus, the 82-residue chain is Protein MGF 110-5L (82 aa).

An N-terminal signal peptide occupies residues 1 to 28; sequence MLVIFLGILGLLANQVSSQLVGQLHPTE. The N-linked (GlcNAc...) asparagine; by host glycan is linked to Asn62.

This sequence belongs to the asfivirus MGF 110 family.

Its function is as follows. Plays a role in virus cell tropism, and may be required for efficient virus replication in macrophages. The polypeptide is Protein MGF 110-5L (Ornithodoros (relapsing fever ticks)).